We begin with the raw amino-acid sequence, 1028 residues long: Formate dehydrogenase major subunit (1028 aa).

Residues 1 to 33 constitute a signal peptide (tat-type signal); the sequence is MQVSRRKFFKICAGGMAGTSAAMLGFAPANVLA. A 4Fe-4S Mo/W bis-MGD-type domain is found at 43 to 114; that stretch reads AFESRNTCTY…GSLDYVNSES (72 aa). Residues C50, C53, C57, and C100 each coordinate [4Fe-4S] cluster. U204 is a non-standard amino acid (selenocysteine).

Belongs to the prokaryotic molybdopterin-containing oxidoreductase family. In terms of assembly, formate dehydrogenase is a membrane-bound complex, formed by subunits alpha, beta and gamma. Mo-bis(molybdopterin guanine dinucleotide) serves as cofactor. The cofactor is [4Fe-4S] cluster. Predicted to be exported by the Tat system. The position of the signal peptide cleavage has not been experimentally proven.

The protein resides in the periplasm. The enzyme catalyses formate + NAD(+) = CO2 + NADH. Its function is as follows. Allows to use formate as major electron donor during anaerobic respiration. Subunit alpha possibly forms the active site. The sequence is that of Formate dehydrogenase major subunit (fdxG) from Haemophilus influenzae (strain ATCC 51907 / DSM 11121 / KW20 / Rd).